We begin with the raw amino-acid sequence, 235 residues long: Large ribosomal subunit protein uL1 (235 aa).

It belongs to the universal ribosomal protein uL1 family. As to quaternary structure, part of the 50S ribosomal subunit.

Functionally, binds directly to 23S rRNA. The L1 stalk is quite mobile in the ribosome, and is involved in E site tRNA release. In terms of biological role, protein L1 is also a translational repressor protein, it controls the translation of the L11 operon by binding to its mRNA. This Desulfovibrio desulfuricans (strain ATCC 27774 / DSM 6949 / MB) protein is Large ribosomal subunit protein uL1.